The chain runs to 390 residues: S-adenosylmethionine synthase 4 (390 aa).

Residue E9 coordinates Mg(2+). H15 is an ATP binding site. E43 serves as a coordination point for K(+). Residues E56 and Q99 each coordinate L-methionine. ATP-binding positions include 167-169 (DGK), 235-238 (SGRF), D246, 252-253 (RK), A269, K273, and K277. D246 contributes to the L-methionine binding site. An L-methionine-binding site is contributed by K277.

It belongs to the AdoMet synthase family. As to quaternary structure, homotetramer. Mn(2+) is required as a cofactor. Requires Mg(2+) as cofactor. The cofactor is Co(2+). It depends on K(+) as a cofactor. Mostly expressed in flowers, seedpods and roots, and, to a lower extent, in stems and leaves.

The protein localises to the cytoplasm. The catalysed reaction is L-methionine + ATP + H2O = S-adenosyl-L-methionine + phosphate + diphosphate. It participates in amino-acid biosynthesis; S-adenosyl-L-methionine biosynthesis; S-adenosyl-L-methionine from L-methionine: step 1/1. Its function is as follows. Catalyzes the formation of S-adenosylmethionine from methionine and ATP. The reaction comprises two steps that are both catalyzed by the same enzyme: formation of S-adenosylmethionine (AdoMet) and triphosphate, and subsequent hydrolysis of the triphosphate. The protein is S-adenosylmethionine synthase 4 (MSAMS4) of Brassica juncea (Indian mustard).